Reading from the N-terminus, the 401-residue chain is N-acetyllactosaminide beta-1,6-N-acetylglucosaminyl-transferase (401 aa).

The Cytoplasmic portion of the chain corresponds to 1-7 (MPPSVRY). The helical; Signal-anchor for type II membrane protein transmembrane segment at 8 to 28 (FFIVSVTTVIVFIVLYVLSFG) threads the bilayer. The Lumenal portion of the chain corresponds to 29-401 (GDQSYQKLNI…EIAIQPSWYF (373 aa)). N-linked (GlcNAc...) asparagine glycosylation is found at asparagine 37, asparagine 255, asparagine 315, and asparagine 389.

It belongs to the glycosyltransferase 14 family.

The protein resides in the golgi apparatus membrane. It carries out the reaction a beta-D-Gal-(1-&gt;4)-beta-D-GlcNAc-(1-&gt;3)-beta-D-Gal-(1-&gt;4)-beta-D-GlcNAc derivative + UDP-N-acetyl-alpha-D-glucosamine = a beta-D-Gal-(1-&gt;4)-beta-D-GlcNAc-(1-&gt;3)-[beta-D-GlcNAc-(1-&gt;6)]-beta-D-Gal-(1-&gt;4)-N-acetyl-beta-D-glucosaminyl derivative + UDP + H(+). The protein operates within protein modification; protein glycosylation. Functionally, branching enzyme that converts linear into branched poly-N-acetyllactosaminoglycans. Introduces the blood group I antigen during embryonic development. It is closely associated with the development and maturation of erythroid cells. The chain is N-acetyllactosaminide beta-1,6-N-acetylglucosaminyl-transferase (Gcnt2) from Mus musculus (Mouse).